The chain runs to 554 residues: Malate synthase 1 (554 aa).

The active-site Proton acceptor is the arginine 177. Aspartate 457 serves as the catalytic Proton donor. An SKL peroxisome targeting motif motif is present at residues 552–554 (SKL).

This sequence belongs to the malate synthase family. As to quaternary structure, interacts with PEX9.

It is found in the peroxisome matrix. The enzyme catalyses glyoxylate + acetyl-CoA + H2O = (S)-malate + CoA + H(+). It participates in carbohydrate metabolism; glyoxylate cycle; (S)-malate from isocitrate: step 2/2. Functionally, malate synthase which takes part in the glyoxylate cycle. MLS1 activity is essential for cells to grow on oleic acid as a sole carbon source. Two steps of the glyoxylate cycle take place in the cytosol, the splitting of isocitrate into succinate and glyoxylate, and the dehydrogenation of malate to oxaloacetate. However, the formation of malate from glyoxylate and acetyl-CoA undertaken MLS1, occurs in the peroxisomes when cells are grown on oleic acid. The source of acetyl-CoA being either peroxisomal when breaking down fatty acids, or cytosolic when extra-cellular two-carbon substrates are used, therefore, although not strictly essential, the peroxisomal localization of MLS1 appears to be advantageous for cells growing on oleic acid, in that acetyl-CoA production and utilization are thereby intimately compartmentalized together to increase efficiency. The polypeptide is Malate synthase 1 (Saccharomyces cerevisiae (strain YJM789) (Baker's yeast)).